The primary structure comprises 497 residues: Di-/tripeptide transporter (497 aa).

At 1-36 (MQNLNKTEKTFFGQPRGLLTLFQTEFWERFSYYGMR) the chain is on the cytoplasmic side. The helical transmembrane segment at 37-55 (AILVYYLYALTTADNAGLG) threads the bilayer. Residues 56 to 64 (LPKAQAMAI) are Extracellular-facing. A helical transmembrane segment spans residues 65–83 (VSIYGALVYLSTIVGGWVA). At 84-92 (DRLLGASRT) the chain is on the cytoplasmic side. The helical transmembrane segment at 93 to 111 (IFLGGILITLGHIALATPF) threads the bilayer. The Extracellular portion of the chain corresponds to 112–115 (GLSS). The helical transmembrane segment at 116 to 134 (LFVALFLIILGTGMLKPNI) threads the bilayer. The Cytoplasmic segment spans residues 135–154 (SNMVGHLYSKDDSRRDTGFN). Residues 155 to 173 (IFVVGINMGSLIAPLIVGT) form a helical membrane-spanning segment. Topologically, residues 174 to 181 (VGQGVNYH) are extracellular. Residues 182–200 (LGFSLAAIGMIFALFAYWY) traverse the membrane as a helical segment. Over 201-224 (GRLRHFPEIGREPSNPMDSKARRN) the chain is Cytoplasmic. A helical membrane pass occupies residues 225–243 (FLITLTIVVIVAIIGFFLL). Topologically, residues 244–254 (YQASPANFINN) are extracellular. The helical transmembrane segment at 255 to 273 (FINVLSIIGIVVPIIYFVM) threads the bilayer. The Cytoplasmic portion of the chain corresponds to 274–293 (MFTSKKVESDERRKLTAYIP). The chain crosses the membrane as a helical span at residues 294-312 (LFLSAIVFWAIEEQSSTII). The Extracellular segment spans residues 313 to 335 (AVWGESRSNLDPTWFGITFHIDP). A helical transmembrane segment spans residues 336 to 354 (SWYQLLNPLFIVLLSPIFV). The Cytoplasmic segment spans residues 355 to 372 (RLWNKLGERQPSTIVKFG). The chain crosses the membrane as a helical span at residues 373-391 (LGLMLTGISYLIMTLPGLL). Residues 392–425 (NGTSGRASALWLVLMFAVQMAGELLVSPVGLSVS) lie on the Extracellular side of the membrane. A helical transmembrane segment spans residues 426–444 (TKLAPVAFQSQMMAMWFLA). The Cytoplasmic segment spans residues 445–497 (DSTSQAINAQITPLFKAATEVHFFAITGIIGIIVGIILLIVKKPILKLMGDVR).

It belongs to the major facilitator superfamily. Proton-dependent oligopeptide transporter (POT/PTR) (TC 2.A.17) family.

The protein resides in the cell membrane. Functionally, proton-dependent uptake of di- or tri-peptides. In Lactococcus lactis subsp. lactis (strain IL1403) (Streptococcus lactis), this protein is Di-/tripeptide transporter (dtpT).